A 333-amino-acid polypeptide reads, in one-letter code: Quinolinate synthase (333 aa).

Residues histidine 41 and serine 58 each coordinate iminosuccinate. [4Fe-4S] cluster is bound at residue cysteine 103. Iminosuccinate is bound by residues 129-131 and serine 146; that span reads YIN. [4Fe-4S] cluster is bound at residue cysteine 189. Iminosuccinate contacts are provided by residues 215–217 and threonine 232; that span reads HPE. Residue cysteine 282 coordinates [4Fe-4S] cluster.

It belongs to the quinolinate synthase family. Type 2 subfamily. The cofactor is [4Fe-4S] cluster.

The protein resides in the cytoplasm. The catalysed reaction is iminosuccinate + dihydroxyacetone phosphate = quinolinate + phosphate + 2 H2O + H(+). It functions in the pathway cofactor biosynthesis; NAD(+) biosynthesis; quinolinate from iminoaspartate: step 1/1. Catalyzes the condensation of iminoaspartate with dihydroxyacetone phosphate to form quinolinate. In Prochlorococcus marinus (strain MIT 9313), this protein is Quinolinate synthase.